The chain runs to 326 residues: ELMO domain-containing protein 1 (326 aa).

The 174-residue stretch at 133–306 (QHEEMLLKLW…KFRKRIIKQL (174 aa)) folds into the ELMO domain.

Its function is as follows. Acts as a GTPase-activating protein (GAP) toward guanine nucleotide exchange factors like ARL2, ARL3, ARF1 and ARF6, but not for GTPases outside the Arf family. The chain is ELMO domain-containing protein 1 (ELMOD1) from Bos taurus (Bovine).